A 336-amino-acid polypeptide reads, in one-letter code: Potassium channel subfamily K member 1 (336 aa).

Residues 1–20 (MLQSLAGSSCVRLVERHRSA) lie on the Cytoplasmic side of the membrane. Residues 21-41 (WCFGFLVLGYLLYLVFGAVVF) form a helical membrane-spanning segment. At 42 to 103 (SSVELPYEDL…SNASGNWNWD (62 aa)) the chain is on the extracellular side. Asparagine 95 carries N-linked (GlcNAc...) asparagine glycosylation. Residues 104-116 (FASALFFASTVLS) constitute an intramembrane region (helical). Residues 117-122 (TTGYGH) lie within the membrane without spanning it. The tract at residues 117–122 (TTGYGH) is selectivity filter 1. The Extracellular portion of the chain corresponds to 123 to 132 (TVPLSDGGKA). The helical transmembrane segment at 133 to 156 (FCIIYSVIGIPFTLLFLTAVVQRV) threads the bilayer. At 157-181 (TVHVTRRPVLYFHVRWGFSKQVVAI) the chain is on the cytoplasmic side. Residues 182-202 (VHAVLLGLITVSCFFFIPAAV) form a helical membrane-spanning segment. Residues 203–211 (FSVLEDDWN) are Extracellular-facing. Residues 212 to 224 (FLESFYFCFISLS) constitute an intramembrane region (helical). Positions 225–230 (TIGLGD) are selectivity filter 2. The stretch at 225–231 (TIGLGDY) is an intramembrane region. The Extracellular portion of the chain corresponds to 232–243 (VPGEGYNQKFRE). A helical membrane pass occupies residues 244-267 (LYKIGITCYLLLGLIAMLVVLETF). At 268 to 336 (CELHELKKFR…SACADGPANH (69 aa)) the chain is on the cytoplasmic side. Residue lysine 274 forms a Glycyl lysine isopeptide (Lys-Gly) (interchain with G-Cter in SUMO) linkage. The segment at 293–299 (IIEHDQL) is important for intracellular retention in recycling endosomes. The tract at residues 315–336 (QKQNEPFVATPSSACADGPANH) is disordered. Residue serine 326 is modified to Phosphoserine.

This sequence belongs to the two pore domain potassium channel (TC 1.A.1.8) family. In terms of assembly, homodimer; disulfide-linked. Heterodimer with KCNK2; disulfide-linked. In astrocytes, forms mostly heterodimeric potassium channels with KCNK2, with only a minor proportion of functional channels containing homodimeric KCNK1. Interacts with KCNK3 and KCNK9, forming functional heterodimeric channels. Interacts with GNG4. Identified in a complex with PSD and ARF6; interacts only with PSD that is bound to ARF6. Interacts with UBE2I. In terms of processing, sumoylation is controversial. Sumoylated by UBE2I. Not sumoylated when expressed in xenopus oocytes or mammalian cells. Sumoylation inactivates the channel, but does not interfere with expression at the cell membrane. Sumoylation of a single subunit is sufficient to silence the dimeric channel. Sumoylation of KCNK1 is sufficient to silence heterodimeric channels formed by KCNK1 and KCNK3 or KCNK9. Desumoylated by SENP1; this activates the channel. Desumoylated by SENP1; this strongly increases halothane-mediated activation of heterodimeric channels formed with KCNK9. SENP1 treatment has no effect. Expressed in renal distal tubules, especially in cortical collecting duct and cortical thick ascending limb, with lower levels in the connecting tubule.

It is found in the cell membrane. It localises to the recycling endosome. Its subcellular location is the synaptic cell membrane. The protein resides in the cytoplasmic vesicle. The protein localises to the perikaryon. It is found in the cell projection. It localises to the dendrite. Its subcellular location is the apical cell membrane. The enzyme catalyses K(+)(in) = K(+)(out). It carries out the reaction NH4(+)(in) = NH4(+)(out). The catalysed reaction is Na(+)(in) = Na(+)(out). It catalyses the reaction Rb(+)(in) = Rb(+)(out). The enzyme catalyses Cs(+)(in) = Cs(+)(out). It carries out the reaction Li(+)(in) = Li(+)(out). The catalysed reaction is L-glutamate(out) = L-glutamate(in). It catalyses the reaction chloride(in) = chloride(out). In terms of biological role, ion channel that contributes to passive transmembrane potassium transport and to the regulation of the resting membrane potential in brain astrocytes, but also in kidney and in other tissues. Forms dimeric channels through which potassium ions pass in accordance with their electrochemical gradient. The channel is selective for K(+) ions at physiological potassium concentrations and at neutral pH, but becomes permeable to Na(+) at subphysiological K(+) levels and upon acidification of the extracellular medium. The homodimer has very low potassium channel activity, when expressed in heterologous systems, and can function as weakly inward rectifying potassium channel. Channel activity is modulated by activation of serotonin receptors. Heterodimeric channels containing KCNK1 and KCNK2 have much higher activity, and may represent the predominant form in astrocytes. Heterodimeric channels containing KCNK1 and KCNK3 or KCNK9 have much higher activity. Heterodimeric channels formed by KCNK1 and KCNK9 may contribute to halothane-sensitive currents. Mediates outward rectifying potassium currents in dentate gyrus granule cells and contributes to the regulation of their resting membrane potential. Contributes to the regulation of action potential firing in dentate gyrus granule cells and down-regulates their intrinsic excitability. In astrocytes, the heterodimer formed by KCNK1 and KCNK2 is required for rapid glutamate release in response to activation of G-protein coupled receptors, such as F2R and CNR1. Required for normal ion and water transport in the kidney. Contributes to the regulation of the resting membrane potential of pancreatic beta cells. The low channel activity of homodimeric KCNK1 may be due to sumoylation. The low channel activity may be due to rapid internalization from the cell membrane and retention in recycling endosomes. Permeable to monovalent cations with ion selectivity for K(+) &gt; Rb(+) &gt;&gt; NH4(+) &gt;&gt; Cs(+) = Na(+) = Li(+). This chain is Potassium channel subfamily K member 1, found in Oryctolagus cuniculus (Rabbit).